The following is a 504-amino-acid chain: Bifunctional purine biosynthesis protein PurH (504 aa).

The MGS-like domain maps to 1 to 144 (MRKRALISVY…KSFKNVVVIS (144 aa)).

Belongs to the PurH family.

It catalyses the reaction (6R)-10-formyltetrahydrofolate + 5-amino-1-(5-phospho-beta-D-ribosyl)imidazole-4-carboxamide = 5-formamido-1-(5-phospho-D-ribosyl)imidazole-4-carboxamide + (6S)-5,6,7,8-tetrahydrofolate. The catalysed reaction is IMP + H2O = 5-formamido-1-(5-phospho-D-ribosyl)imidazole-4-carboxamide. Its pathway is purine metabolism; IMP biosynthesis via de novo pathway; 5-formamido-1-(5-phospho-D-ribosyl)imidazole-4-carboxamide from 5-amino-1-(5-phospho-D-ribosyl)imidazole-4-carboxamide (10-formyl THF route): step 1/1. It functions in the pathway purine metabolism; IMP biosynthesis via de novo pathway; IMP from 5-formamido-1-(5-phospho-D-ribosyl)imidazole-4-carboxamide: step 1/1. The chain is Bifunctional purine biosynthesis protein PurH from Fusobacterium nucleatum subsp. nucleatum (strain ATCC 25586 / DSM 15643 / BCRC 10681 / CIP 101130 / JCM 8532 / KCTC 2640 / LMG 13131 / VPI 4355).